The following is a 149-amino-acid chain: MAAKVEPFWMRKTLDQLDTQEWESLCDGCGLCCLQKLEDEEDNAVYYTRIACKLLDLKTCQCSDYANRRASVPDCIQLTPGQADEFKWLPPTCGYRLVSEGKDLPLWHHLVCGDRTAVHHERISQSGRMLSENNVAEDDWEDYLIFRAG.

Belongs to the UPF0260 family.

This chain is UPF0260 protein Psyr_1567, found in Pseudomonas syringae pv. syringae (strain B728a).